The chain runs to 441 residues: Gluconate 2-dehydrogenase cytochrome c subunit (441 aa).

An N-terminal signal peptide occupies residues 1–19; that stretch reads MMKSILALVLGTLSFAALA. Cytochrome c domains are found at residues 26–129, 173–289, and 312–403; these read ALVK…MHGV, PVLA…KSLG, and DDSQ…RGSW. 9 residues coordinate heme c: cysteine 40, cysteine 43, histidine 44, cysteine 188, cysteine 191, histidine 192, cysteine 325, cysteine 328, and histidine 329.

As to quaternary structure, heterotrimer. FAD serves as cofactor. Binds 3 heme c groupd covalently per subunit.

Its subcellular location is the cell membrane. The catalysed reaction is D-gluconate + A = 2-dehydro-D-gluconate + AH2. In terms of biological role, part of the heterotrimer that catalyzes the conversion of D-gluconate to 2-dehydro-D-gluconate. This chain is Gluconate 2-dehydrogenase cytochrome c subunit, found in Pantoea cypripedii (Pectobacterium cypripedii).